The primary structure comprises 291 residues: MAGSLSEIKAKIISTEKTSKITSAMRMVSSAKLVKSEQAARDFQIYASKIRQITTDLLKSDLTTGSDNPMLVSRPVKKTGYIVITSDKGLVGGYNSKILKSIMDMIQEYHAAGDYEIISIGSIGSDFFKARGMNVAFELRGLADQPSFDQVGRIISQSVDMFVNEIFDELYVCYNHHVNSLTSQVRVQRMLPISDLVAEEAAEEGVTGFELEPNRHVILEQLLPQFTESLIYGAIIDAKTAEHAAGMTAMQTATDNAKHVINDLTIQYNRARQAAITQEITEIVAGANALE.

The protein belongs to the ATPase gamma chain family. F-type ATPases have 2 components, CF(1) - the catalytic core - and CF(0) - the membrane proton channel. CF(1) has five subunits: alpha(3), beta(3), gamma(1), delta(1), epsilon(1). CF(0) has three main subunits: a, b and c.

The protein resides in the cell membrane. Produces ATP from ADP in the presence of a proton gradient across the membrane. The gamma chain is believed to be important in regulating ATPase activity and the flow of protons through the CF(0) complex. The protein is ATP synthase gamma chain of Streptococcus equi subsp. zooepidemicus (strain MGCS10565).